Consider the following 461-residue polypeptide: tRNA-2-methylthio-N(6)-dimethylallyladenosine synthase (461 aa).

One can recognise an MTTase N-terminal domain in the interval 18 to 134; that stretch reads KHIYIQTLGC…LPDFISRIEK (117 aa). The [4Fe-4S] cluster site is built by C27, C63, C97, C172, C176, and C179. One can recognise a Radical SAM core domain in the interval 158–388; sequence CNGQVSSFVT…QALQEQHTLE (231 aa). The region spanning 391-454 is the TRAM domain; that stretch reads KAMEGKQEDV…LHSLRGEMLC (64 aa).

It belongs to the methylthiotransferase family. MiaB subfamily. In terms of assembly, monomer. Requires [4Fe-4S] cluster as cofactor.

Its subcellular location is the cytoplasm. It catalyses the reaction N(6)-dimethylallyladenosine(37) in tRNA + (sulfur carrier)-SH + AH2 + 2 S-adenosyl-L-methionine = 2-methylsulfanyl-N(6)-dimethylallyladenosine(37) in tRNA + (sulfur carrier)-H + 5'-deoxyadenosine + L-methionine + A + S-adenosyl-L-homocysteine + 2 H(+). Its function is as follows. Catalyzes the methylthiolation of N6-(dimethylallyl)adenosine (i(6)A), leading to the formation of 2-methylthio-N6-(dimethylallyl)adenosine (ms(2)i(6)A) at position 37 in tRNAs that read codons beginning with uridine. The chain is tRNA-2-methylthio-N(6)-dimethylallyladenosine synthase from Syntrophus aciditrophicus (strain SB).